A 367-amino-acid polypeptide reads, in one-letter code: MEAERQNQIAARLADYAEREQALRRYLDYDAKTERLHVVNAELEDPAVWNDPKHAQDLGREKKSLEDVVQTLTELGQGVADALELFELAAADEDDATLESIENDANTFQERLEGLEFRRMFSNPADPLNCFLDIQAGAGGTEAQDWASMLLRQYLKYAERKGFKAEVLEESEGEIAGIKSATIKLEGEYAFGYLRTETGVHRLVRKSPFDSSGGRHTSFASVFVYPEVDESFEVEVNPADLRVDTYRASGAGGQHINKTDSAVRITHMPSGIVVQCQNDRSQHRNRAEAMQMLKSKLYELEMRKRMAEQQKLEDSKTDVGWGHQIRSYVLDQSRIKDLRTNVEISNTQKVLDGDLDPFIQASLKQGV.

Gln254 is modified (N5-methylglutamine).

It belongs to the prokaryotic/mitochondrial release factor family. Post-translationally, methylated by PrmC. Methylation increases the termination efficiency of RF2.

It is found in the cytoplasm. Its function is as follows. Peptide chain release factor 2 directs the termination of translation in response to the peptide chain termination codons UGA and UAA. This Bordetella avium (strain 197N) protein is Peptide chain release factor 2.